We begin with the raw amino-acid sequence, 450 residues long: Tubulin alpha-3 chain (450 aa).

A GTP-binding site is contributed by Q11. At K40 the chain carries N6-acetyllysine. GTP is bound by residues E71, G144, T145, T179, N206, and N228. E71 is a binding site for Mg(2+). Residue E254 is part of the active site.

This sequence belongs to the tubulin family. As to quaternary structure, dimer of alpha and beta chains. A typical microtubule is a hollow water-filled tube with an outer diameter of 25 nm and an inner diameter of 15 nM. Alpha-beta heterodimers associate head-to-tail to form protofilaments running lengthwise along the microtubule wall with the beta-tubulin subunit facing the microtubule plus end conferring a structural polarity. Microtubules usually have 13 protofilaments but different protofilament numbers can be found in some organisms and specialized cells. It depends on Mg(2+) as a cofactor. Post-translationally, undergoes a tyrosination/detyrosination cycle, the cyclic removal and re-addition of a C-terminal tyrosine residue by the enzymes tubulin tyrosine carboxypeptidase (TTCP) and tubulin tyrosine ligase (TTL), respectively. Acetylation of alpha chains at Lys-40 stabilizes microtubules and affects affinity and processivity of microtubule motors. This modification has a role in multiple cellular functions, ranging from cell motility, cell cycle progression or cell differentiation to intracellular trafficking and signaling.

The protein localises to the cytoplasm. The protein resides in the cytoskeleton. It catalyses the reaction GTP + H2O = GDP + phosphate + H(+). In terms of biological role, tubulin is the major constituent of microtubules, a cylinder consisting of laterally associated linear protofilaments composed of alpha- and beta-tubulin heterodimers. Microtubules grow by the addition of GTP-tubulin dimers to the microtubule end, where a stabilizing cap forms. Below the cap, tubulin dimers are in GDP-bound state, owing to GTPase activity of alpha-tubulin. The sequence is that of Tubulin alpha-3 chain (TUBA3) from Zea mays (Maize).